Consider the following 387-residue polypeptide: 3-ketoacyl-CoA thiolase (387 aa).

The Acyl-thioester intermediate role is filled by Cys91. Catalysis depends on proton acceptor residues His343 and Cys373.

The protein belongs to the thiolase-like superfamily. Thiolase family. As to quaternary structure, heterotetramer of two alpha chains (FadB) and two beta chains (FadA).

The protein localises to the cytoplasm. It carries out the reaction an acyl-CoA + acetyl-CoA = a 3-oxoacyl-CoA + CoA. Its pathway is lipid metabolism; fatty acid beta-oxidation. Catalyzes the final step of fatty acid oxidation in which acetyl-CoA is released and the CoA ester of a fatty acid two carbons shorter is formed. This is 3-ketoacyl-CoA thiolase from Yersinia enterocolitica serotype O:8 / biotype 1B (strain NCTC 13174 / 8081).